A 198-amino-acid chain; its full sequence is Recombination protein RecR (198 aa).

A C4-type zinc finger spans residues 57–72 (CSICGNLTDDDPCHIC). One can recognise a Toprim domain in the interval 80-175 (TTILVVEDAK…KVTRLARGLA (96 aa)).

Belongs to the RecR family.

Its function is as follows. May play a role in DNA repair. It seems to be involved in an RecBC-independent recombinational process of DNA repair. It may act with RecF and RecO. In Streptococcus pyogenes serotype M1, this protein is Recombination protein RecR.